The primary structure comprises 193 residues: Xanthine phosphoribosyltransferase (193 aa).

Leucine 20 and threonine 27 together coordinate xanthine. Residue 128–132 (ANGQA) coordinates 5-phospho-alpha-D-ribose 1-diphosphate. Lysine 156 contributes to the xanthine binding site.

Belongs to the purine/pyrimidine phosphoribosyltransferase family. Xpt subfamily. Homodimer.

The protein resides in the cytoplasm. The catalysed reaction is XMP + diphosphate = xanthine + 5-phospho-alpha-D-ribose 1-diphosphate. The protein operates within purine metabolism; XMP biosynthesis via salvage pathway; XMP from xanthine: step 1/1. Its function is as follows. Converts the preformed base xanthine, a product of nucleic acid breakdown, to xanthosine 5'-monophosphate (XMP), so it can be reused for RNA or DNA synthesis. This is Xanthine phosphoribosyltransferase from Streptococcus equi subsp. equi (strain 4047).